Consider the following 962-residue polypeptide: MGKPTLLEPGHLYNVPAEHKNDVPIHYIITWIKQRLPEFGGAIPTSLADRVLIIKSRTGSGKSTALPVHVFRILRNENTHSFQKYLGRSVICTQPRVLTAVTLAKDIGASTHYPDMILGQTVGYQTKPLTEKPNRGLIYATAGVLLAQLHTMTDDEIASRYAFMIIDEAHERALGIDLMLMYIKSMLERMLQRGSIGALRIPFVILTSATIDTHKYSTYFGIGKENIILVEGRQYGVETHWPLYNTNNYIKTACETALTIHKENIHDRPTEADILIFMPGMAEIRFLSMLLNNANMDLAKEKLPLMLILPIDSEAIAQENEAYLGLKAEIKNLWVKNPLTAKVEKPLRRVIVSTVVAETGLTIETLKYVIDPGWNRSIETYYPEWAGGLITRPAAQSRIEQRKGRVGRVFPGHFYPLYTKHVFEQIPAQQYPEIITEGPGAIFLSIVVETIKKNKEGVFKAEEIDMLDPPPTDALASAIERAIVAGLLTRGEKGLQLTQLGDIASRFSFLSIEEARMCFSGYFWQAAISDIATILAVVSVADKKLTNLLDSKQRNGAMLAEAVLAGIPPFLQNIDNAYTNIHLLLADDLLEGLFIFEGFQHAIVYFINNKVNNVAKHLREWCEKKMLKYSSMVQILARREDILNELAIVGLNPFHQWQNRLASANAETFLKRVCTLKQCMYEAYRLNCFCYDEHRLLYTGRNGIHFSYHDAVIKNPSCIVTPRIMLSPVSKQYMEWRLEPSFVSVLDGFVNVDINFLLPRQEIPNILGGAEDEEEEPPLPIQVFLHKYVKTHFHFSGKSFKELKMKPGQTIKFPETTLINMIPDIPKNVVQTYLEISVCHQYSFKRLIYCETFYTDMDDVQHENSVELIGLPMAAHHLTINDFNKLYHLLKPDGFLMVYDLHQSQEAFWLHSLQDALGHHTIRRDMDFHTIPEWETIFKECGFTPIFSKQPSEHELFIVFKK.

Residues 43–229 (IPTSLADRVL…FGIGKENIIL (187 aa)) enclose the Helicase ATP-binding domain. ATP is bound at residue 56–63 (SRTGSGKS). The DEAH box signature appears at 167–170 (DEAH). In terms of domain architecture, Helicase C-terminal spans 253-459 (ACETALTIHK…TIKKNKEGVF (207 aa)). The chain crosses the membrane as a helical span at residues 521 to 541 (GYFWQAAISDIATILAVVSVA).

The protein belongs to the DEAD box helicase family. DEAH subfamily.

It is found in the host membrane. The protein localises to the virion. It carries out the reaction ATP + H2O = ADP + phosphate + H(+). This is Putative RNA Helicase B962L from African swine fever virus (isolate Tick/South Africa/Pretoriuskop Pr4/1996) (ASFV).